Consider the following 158-residue polypeptide: Glycine/sarcosine/betaine reductase complex component A1 (158 aa).

Residue selenocysteine 46 is part of the active site. Position 46 (selenocysteine 46) is a non-standard amino acid, selenocysteine.

This sequence belongs to the GrdA family. Monomer. Component of the glycine, sarcosine and betaine reductase complexes, together with components B and C.

It carries out the reaction acetyl phosphate + [thioredoxin]-disulfide + NH4(+) + H2O = [thioredoxin]-dithiol + glycine + phosphate + H(+). It catalyses the reaction acetyl phosphate + methylamine + [thioredoxin]-disulfide + H2O = sarcosine + [thioredoxin]-dithiol + phosphate + H(+). The enzyme catalyses acetyl phosphate + trimethylamine + [thioredoxin]-disulfide + H2O = glycine betaine + [thioredoxin]-dithiol + phosphate + H(+). Its function is as follows. In the first step of glycine, betaine and sarcosine reductases, the substrate is bound to component PB via a Schiff base intermediate. Then the PB-activated substrate is nucleophilically attacked by the selenol anion of component PA to transform it to a carboxymethylated selenoether and the respective amine. By action of component PC, acetyl phosphate is formed, leaving component PA in its oxidized state. Finally component PA becomes reduced by the thioredoxin system to start a new catalytic cycle of reductive deamination. The sequence is that of Glycine/sarcosine/betaine reductase complex component A1 (grdA1) from Photobacterium profundum (strain SS9).